Consider the following 423-residue polypeptide: Serine--tRNA ligase (423 aa).

Threonine 230–glutamate 232 provides a ligand contact to L-serine. Arginine 261 to glutamate 263 serves as a coordination point for ATP. An L-serine-binding site is contributed by glutamate 284. Glutamate 348–serine 351 contacts ATP. L-serine is bound at residue serine 384.

This sequence belongs to the class-II aminoacyl-tRNA synthetase family. Type-1 seryl-tRNA synthetase subfamily. In terms of assembly, homodimer. The tRNA molecule binds across the dimer.

It localises to the cytoplasm. It catalyses the reaction tRNA(Ser) + L-serine + ATP = L-seryl-tRNA(Ser) + AMP + diphosphate + H(+). The enzyme catalyses tRNA(Sec) + L-serine + ATP = L-seryl-tRNA(Sec) + AMP + diphosphate + H(+). The protein operates within aminoacyl-tRNA biosynthesis; selenocysteinyl-tRNA(Sec) biosynthesis; L-seryl-tRNA(Sec) from L-serine and tRNA(Sec): step 1/1. Its function is as follows. Catalyzes the attachment of serine to tRNA(Ser). Is also able to aminoacylate tRNA(Sec) with serine, to form the misacylated tRNA L-seryl-tRNA(Sec), which will be further converted into selenocysteinyl-tRNA(Sec). The sequence is that of Serine--tRNA ligase from Macrococcus caseolyticus (strain JCSC5402) (Macrococcoides caseolyticum).